The following is a 269-amino-acid chain: Seven in absentia homolog 3 (269 aa).

The segment at 61–132 (GSFHPHHLSH…VVPHLRQIHR (72 aa)) adopts an SIAH-type; degenerate zinc-finger fold. Cys-107, Cys-114, His-126, and His-131 together coordinate Zn(2+).

Belongs to the SINA (Seven in absentia) family.

The protein resides in the mitochondrion. Functionally, negative regulator of PRKN translocation to damaged mitochondria. Acts probably by destabilizing PINK1 protein, hence inhibiting PRKN targeting to dysfunctional depolarized mitochondria. The sequence is that of Seven in absentia homolog 3 (SIAH3) from Homo sapiens (Human).